We begin with the raw amino-acid sequence, 407 residues long: Aspartokinase (407 aa).

7–10 (KFGG) lines the ATP pocket. 25 to 30 (RVIEEV) provides a ligand contact to substrate. Residue Ser-41 coordinates ATP. Substrate contacts are provided by residues 47-49 (TDE), Glu-74, 125-126 (LD), 150-153 (RGGS), and Ser-153. Residues 173-174 (TD) and 179-184 (FTTDPR) each bind ATP. ACT domains are found at residues 264–338 (VTVV…LAKV) and 340–407 (IVGS…AVRS). Substrate is bound by residues 289 to 291 (NVD), Gln-295, 351 to 352 (VA), 365 to 366 (EI), and 372 to 373 (SE).

This sequence belongs to the aspartokinase family. Tetramer consisting of 2 isoforms Alpha (catalytic and regulation) and of a homodimer of 2 isoforms Beta (regulation).

It catalyses the reaction L-aspartate + ATP = 4-phospho-L-aspartate + ADP. Its pathway is amino-acid biosynthesis; L-lysine biosynthesis via DAP pathway; (S)-tetrahydrodipicolinate from L-aspartate: step 1/4. It participates in amino-acid biosynthesis; L-methionine biosynthesis via de novo pathway; L-homoserine from L-aspartate: step 1/3. It functions in the pathway amino-acid biosynthesis; L-threonine biosynthesis; L-threonine from L-aspartate: step 1/5. With respect to regulation, lysine-sensitive. In terms of biological role, catalyzes the phosphorylation of the beta-carboxyl group of aspartic acid with ATP to yield 4-phospho-L-aspartate, which is involved in the branched biosynthetic pathway leading to the biosynthesis of amino acids threonine, isoleucine and methionine. The protein is Aspartokinase (lysC) of Geobacillus stearothermophilus (Bacillus stearothermophilus).